A 520-amino-acid chain; its full sequence is Cytochrome P450 734A1 (520 aa).

A helical transmembrane segment spans residues 13 to 33 (VLVLSVILSLVIVKGMSLLWW). Position 463 (Cys463) interacts with heme.

It belongs to the cytochrome P450 family. The cofactor is heme.

The protein localises to the membrane. Its function is as follows. Cytochrome P450 involved in brassinosteroids (BRs) inactivation and regulation of BRs homeostasis. Inactivates the BRs castasterone (CS) and brassinolide (BL) through carbon 26 hydroxylation. Acts in association with CYP72C1 to inactivate BRs and modulate photomorphogenesis. This chain is Cytochrome P450 734A1 (CYP734A1), found in Arabidopsis thaliana (Mouse-ear cress).